The sequence spans 37 residues: M-oxotoxin-Ot2b (37 aa).

In terms of tissue distribution, expressed by the venom gland.

It localises to the secreted. Its function is as follows. Disrupts biological membranes, particularly those rich in phosphocholine. Has antimicrobial activity against Gram-negative bacterium E.coli, Gram-positive bacteria B.subtilis and S.aureus, and hemolytic activity against sheep, pig and guinea pig red blood cells. Has insecticidal activity against S.frugiperda ovarian cells by opening non-selective ion channels. Enhances the insecticidal activity of spider venom neurotoxic peptides. In Oxyopes takobius (Lynx spider), this protein is M-oxotoxin-Ot2b.